Consider the following 357-residue polypeptide: Aspartate carbamoyltransferase catalytic subunit (357 aa).

A compositionally biased stretch (polar residues) spans 1-17 (MSNSIDSQSIPTISPTD). The segment at 1 to 21 (MSNSIDSQSIPTISPTDYTKF) is disordered. The carbamoyl phosphate site is built by R97 and T98. K125 lines the L-aspartate pocket. Residues R147, H177, and Q180 each coordinate carbamoyl phosphate. Positions 211 and 266 each coordinate L-aspartate. Carbamoyl phosphate is bound by residues G307 and P308.

This sequence belongs to the aspartate/ornithine carbamoyltransferase superfamily. ATCase family. As to quaternary structure, heterododecamer (2C3:3R2) of six catalytic PyrB chains organized as two trimers (C3), and six regulatory PyrI chains organized as three dimers (R2).

It catalyses the reaction carbamoyl phosphate + L-aspartate = N-carbamoyl-L-aspartate + phosphate + H(+). Its pathway is pyrimidine metabolism; UMP biosynthesis via de novo pathway; (S)-dihydroorotate from bicarbonate: step 2/3. In terms of biological role, catalyzes the condensation of carbamoyl phosphate and aspartate to form carbamoyl aspartate and inorganic phosphate, the committed step in the de novo pyrimidine nucleotide biosynthesis pathway. This is Aspartate carbamoyltransferase catalytic subunit from Psychrobacter arcticus (strain DSM 17307 / VKM B-2377 / 273-4).